A 405-amino-acid chain; its full sequence is ATP phosphoribosyltransferase regulatory subunit (405 aa).

This sequence belongs to the class-II aminoacyl-tRNA synthetase family. HisZ subfamily. As to quaternary structure, heteromultimer composed of HisG and HisZ subunits.

The protein localises to the cytoplasm. The protein operates within amino-acid biosynthesis; L-histidine biosynthesis; L-histidine from 5-phospho-alpha-D-ribose 1-diphosphate: step 1/9. Functionally, required for the first step of histidine biosynthesis. May allow the feedback regulation of ATP phosphoribosyltransferase activity by histidine. This is ATP phosphoribosyltransferase regulatory subunit from Oceanobacillus iheyensis (strain DSM 14371 / CIP 107618 / JCM 11309 / KCTC 3954 / HTE831).